The sequence spans 134 residues: Arsenate reductase 2 (134 aa).

Active-site nucleophile residues include C11, C83, and C90. 2 cysteine pairs are disulfide-bonded: C11–C83 and C83–C90.

This sequence belongs to the low molecular weight phosphotyrosine protein phosphatase family. Thioredoxin-coupled ArsC subfamily.

It localises to the cytoplasm. It catalyses the reaction arsenate + [thioredoxin]-dithiol + H(+) = arsenite + [thioredoxin]-disulfide + H2O. Catalyzes the reduction of arsenate [As(V)] to arsenite [As(III)]. In Bacillus cereus (strain ATCC 10987 / NRS 248), this protein is Arsenate reductase 2.